A 199-amino-acid chain; its full sequence is UPF0462 protein C4orf33 (199 aa).

The protein belongs to the UPF0462 family.

The chain is UPF0462 protein C4orf33 (C4orf33) from Homo sapiens (Human).